We begin with the raw amino-acid sequence, 548 residues long: Probable malate:quinone oxidoreductase (548 aa).

The segment at 521-548 (DKPQAADSTPKPQLKPQPVQKEVADIAL) is disordered. Low complexity predominate over residues 530-541 (PKPQLKPQPVQK).

This sequence belongs to the MQO family. It depends on FAD as a cofactor.

It catalyses the reaction (S)-malate + a quinone = a quinol + oxaloacetate. It functions in the pathway carbohydrate metabolism; tricarboxylic acid cycle; oxaloacetate from (S)-malate (quinone route): step 1/1. The protein is Probable malate:quinone oxidoreductase of Escherichia coli O17:K52:H18 (strain UMN026 / ExPEC).